Consider the following 206-residue polypeptide: Potassium-transporting ATPase KdpC subunit (206 aa).

The chain crosses the membrane as a helical span at residues 14 to 34; it reads VLAVFTLFGLGLAYSLIATGI.

The protein belongs to the KdpC family. As to quaternary structure, the system is composed of three essential subunits: KdpA, KdpB and KdpC.

The protein localises to the cell inner membrane. Functionally, part of the high-affinity ATP-driven potassium transport (or Kdp) system, which catalyzes the hydrolysis of ATP coupled with the electrogenic transport of potassium into the cytoplasm. This subunit acts as a catalytic chaperone that increases the ATP-binding affinity of the ATP-hydrolyzing subunit KdpB by the formation of a transient KdpB/KdpC/ATP ternary complex. The polypeptide is Potassium-transporting ATPase KdpC subunit (Xanthomonas axonopodis pv. citri (strain 306)).